Here is a 232-residue protein sequence, read N- to C-terminus: Orotidine 5'-phosphate decarboxylase (232 aa).

Residues aspartate 11, lysine 32, aspartate 59–threonine 68, threonine 118, arginine 180, glutamine 189, glycine 209, and arginine 210 contribute to the substrate site. The active-site Proton donor is the lysine 61.

Belongs to the OMP decarboxylase family. Type 1 subfamily. As to quaternary structure, homodimer.

The catalysed reaction is orotidine 5'-phosphate + H(+) = UMP + CO2. The protein operates within pyrimidine metabolism; UMP biosynthesis via de novo pathway; UMP from orotate: step 2/2. Its function is as follows. Catalyzes the decarboxylation of orotidine 5'-monophosphate (OMP) to uridine 5'-monophosphate (UMP). The protein is Orotidine 5'-phosphate decarboxylase of Gloeothece citriformis (strain PCC 7424) (Cyanothece sp. (strain PCC 7424)).